The sequence spans 277 residues: Protein G1-like2 (277 aa).

A compositionally biased stretch (gly residues) spans 1–16; sequence MQGGGGGDSSGGGGGE. Disordered stretches follow at residues 1–28, 141–203, and 225–245; these read MQGGGGGDSSGGGGGEAPRPSRYESQKR, RGIA…GHFF, and HQVSNAGNGGNTNTNTNTNTG. Residues 19 to 28 are compositionally biased toward basic and acidic residues; the sequence is RPSRYESQKR. An ALOG domain is found at 22–149; that stretch reads RYESQKRRDW…ARGIAYEKKR (128 aa). A Nuclear localization signal motif is present at residues 147-151; the sequence is KKRRK. The span at 154–177 shows a compositional bias: low complexity; it reads PTSSSSSQAAAAAAAATSPASPAA. Residues 178-187 are compositionally biased toward pro residues; sequence SPTPPPPPPT.

This sequence belongs to the plant homeotic and developmental regulators ALOG protein family.

It localises to the nucleus. Its function is as follows. Probable transcription regulator that acts as a developmental regulator by promoting cell growth in response to light. This is Protein G1-like2 (G1L2) from Oryza sativa subsp. japonica (Rice).